The sequence spans 932 residues: Isoleucine--tRNA ligase (932 aa).

The 'HIGH' region motif lies at 59-69; it reads PYANGTIHIGH. An L-isoleucyl-5'-AMP-binding site is contributed by Glu-562. The 'KMSKS' region motif lies at 603–607; the sequence is KMSKS. Lys-606 is an ATP binding site. Zn(2+)-binding residues include Cys-899, Cys-902, Cys-915, and Cys-918.

The protein belongs to the class-I aminoacyl-tRNA synthetase family. IleS type 1 subfamily. As to quaternary structure, monomer. Zn(2+) serves as cofactor.

The protein resides in the cytoplasm. The catalysed reaction is tRNA(Ile) + L-isoleucine + ATP = L-isoleucyl-tRNA(Ile) + AMP + diphosphate. Functionally, catalyzes the attachment of isoleucine to tRNA(Ile). As IleRS can inadvertently accommodate and process structurally similar amino acids such as valine, to avoid such errors it has two additional distinct tRNA(Ile)-dependent editing activities. One activity is designated as 'pretransfer' editing and involves the hydrolysis of activated Val-AMP. The other activity is designated 'posttransfer' editing and involves deacylation of mischarged Val-tRNA(Ile). This Pasteurella multocida (strain Pm70) protein is Isoleucine--tRNA ligase.